A 149-amino-acid polypeptide reads, in one-letter code: D-aminoacyl-tRNA deacylase (149 aa).

Residues 137 to 138 (GP) carry the Gly-cisPro motif, important for rejection of L-amino acids motif.

This sequence belongs to the DTD family. Homodimer.

It localises to the cytoplasm. It catalyses the reaction glycyl-tRNA(Ala) + H2O = tRNA(Ala) + glycine + H(+). The enzyme catalyses a D-aminoacyl-tRNA + H2O = a tRNA + a D-alpha-amino acid + H(+). In terms of biological role, an aminoacyl-tRNA editing enzyme that deacylates mischarged D-aminoacyl-tRNAs. Also deacylates mischarged glycyl-tRNA(Ala), protecting cells against glycine mischarging by AlaRS. Acts via tRNA-based rather than protein-based catalysis; rejects L-amino acids rather than detecting D-amino acids in the active site. By recycling D-aminoacyl-tRNA to D-amino acids and free tRNA molecules, this enzyme counteracts the toxicity associated with the formation of D-aminoacyl-tRNA entities in vivo and helps enforce protein L-homochirality. This chain is D-aminoacyl-tRNA deacylase, found in Syntrophomonas wolfei subsp. wolfei (strain DSM 2245B / Goettingen).